The following is a 105-amino-acid chain: UPF0235 protein RPR_04990 (105 aa).

The protein belongs to the UPF0235 family.

The sequence is that of UPF0235 protein RPR_04990 from Rickettsia peacockii (strain Rustic).